Reading from the N-terminus, the 412-residue chain is Glucose-1-phosphate adenylyltransferase (412 aa).

Alpha-D-glucose 1-phosphate contacts are provided by residues Tyr98, Gly163, 178-179 (EK), and Ser189.

It belongs to the bacterial/plant glucose-1-phosphate adenylyltransferase family. As to quaternary structure, homotetramer.

It catalyses the reaction alpha-D-glucose 1-phosphate + ATP + H(+) = ADP-alpha-D-glucose + diphosphate. It participates in glycan biosynthesis; glycogen biosynthesis. Involved in the biosynthesis of ADP-glucose, a building block required for the elongation reactions to produce glycogen. Catalyzes the reaction between ATP and alpha-D-glucose 1-phosphate (G1P) to produce pyrophosphate and ADP-Glc. The polypeptide is Glucose-1-phosphate adenylyltransferase (Thermosipho melanesiensis (strain DSM 12029 / CIP 104789 / BI429)).